The primary structure comprises 357 residues: GDP-mannose transporter 2 (357 aa).

Residues 1-43 are Cytoplasmic-facing; it reads MASTRNGISKDELLPTYELQSQRDVENSGSVTSFASKISNNAA. Residues 44–64 form a helical membrane-spanning segment; that stretch reads AAVLAYCLSSISMTLVNKYVV. Topologically, residues 65–68 are lumenal; the sequence is SGAS. Residues 69 to 89 form a helical membrane-spanning segment; sequence WNLSFLYLAIQSFIGTVAIMV. Topologically, residues 90 to 107 are cytoplasmic; it reads CKKAGLIQNLGLFDLKKA. The chain crosses the membrane as a helical span at residues 108–128; that stretch reads QTWLPISLLLVGMIYTGNKAL. Residue glutamine 129 is a topological domain, lumenal. A helical transmembrane segment spans residues 130–150; that stretch reads FLSVPVYTIFKNLTIIVIAYG. Topologically, residues 151–161 are cytoplasmic; it reads EVFMVGGSVKP. A helical membrane pass occupies residues 162–182; it reads LALLSFGLMVLSSVVAAWADI. The Lumenal portion of the chain corresponds to 183–196; sequence QIATAATAKASSDS. The chain crosses the membrane as a helical span at residues 197–217; the sequence is AVATLSALNAGYAWMGTNVVF. Over 218-238 the chain is Cytoplasmic; the sequence is SASYALGMRRVIKKTNFDNWD. A helical membrane pass occupies residues 239–259; it reads VMFYNNLLSVPILLLSSLLVE. The Lumenal portion of the chain corresponds to 260-277; the sequence is DWSSENLQRNFPAESRQS. Residues 278 to 298 traverse the membrane as a helical segment; the sequence is LVIGIFYSGVAAIFISYCTAW. At 299 to 306 the chain is on the cytoplasmic side; that stretch reads CVRATSST. A helical membrane pass occupies residues 307–327; it reads TYAMVGALNKLPLAVAGIVFF. The Lumenal segment spans residues 328–332; that stretch reads AAPVT. A helical membrane pass occupies residues 333–352; the sequence is FGSVSAIVLGFISGLVYTWA. Residues 353 to 357 lie on the Cytoplasmic side of the membrane; it reads KSTGA.

This sequence belongs to the TPT transporter family. SLC35D subfamily. Homooligomer.

The protein localises to the golgi apparatus membrane. It is found in the cytoplasmic vesicle membrane. The protein resides in the endoplasmic reticulum membrane. In terms of biological role, involved in the import of GDP-mannose from the cytoplasm into the Golgi lumen. This chain is GDP-mannose transporter 2 (gmt2), found in Emericella nidulans (strain FGSC A4 / ATCC 38163 / CBS 112.46 / NRRL 194 / M139) (Aspergillus nidulans).